We begin with the raw amino-acid sequence, 710 residues long: Ephexin-1 (710 aa).

2 stretches are compositionally biased toward basic and acidic residues: residues 1–11 (METRESEDLEK) and 26–41 (EPAK…KEET). Residues 1 to 143 (METRESEDLE…PGNGATPEEW (143 aa)) are disordered. Residues 1–273 (METRESEDLE…LEILQPEEIK (273 aa)) are regulatory region; modulates activity toward RHOA, RAC1 and CDC42. 2 stretches are compositionally biased toward polar residues: residues 89–102 (ADSQ…NEPL) and 127–136 (MSESSSTPGN). Phosphotyrosine is present on Tyr179. Residues 194-236 (RRQQDAEIEDNTNGSPASEDTPEEEEEEEEEEEPASPPERKTL) form a disordered region. The span at 213 to 227 (DTPEEEEEEEEEEEP) shows a compositional bias: acidic residues. The region spanning 273 to 457 (KLQEAMFELV…EMVVKACNEG (185 aa)) is the DH domain. Residues 489–601 (WLLKQGELQQ…WMTSLAPNRR (113 aa)) form the PH domain. Positions 612 to 673 (LDCPQVQCVH…PSSMTEEILN (62 aa)) constitute an SH3 domain. The segment covering 687–699 (VHKMDDPQRSQNK) has biased composition (basic and acidic residues). The tract at residues 687–710 (VHKMDDPQRSQNKDRRKLGSRNRQ) is disordered. Basic residues predominate over residues 700–710 (DRRKLGSRNRQ).

In terms of assembly, interacts with CDK5R1 and EPHA4; activated by EPHA4 through the CDK5 kinase. Src-dependent phosphorylation at Tyr-179 upon EPHA4 activation increases the guanine exchange factor activity toward RHOA. Phosphorylation by CDK5 upon EPHA4 activation by EFNA1 may regulate dendritic spine morphogenesis. Highly expressed in brain specifically in caudate nucleus and to a lower extent in amygdala and hippocampus. Also detected in lung.

Its subcellular location is the cytoplasm. The protein localises to the membrane. The protein resides in the cell projection. It localises to the growth cone. Functionally, acts as a guanine nucleotide exchange factor (GEF) which differentially activates the GTPases RHOA, RAC1 and CDC42. Plays a role in axon guidance regulating ephrin-induced growth cone collapse and dendritic spine morphogenesis. Upon activation by ephrin through EPHA4, the GEF activity switches toward RHOA resulting in its activation. Activated RHOA promotes cone retraction at the expense of RAC1- and CDC42-stimulated growth cone extension. This is Ephexin-1 (NGEF) from Homo sapiens (Human).